Consider the following 30-residue polypeptide: Pyrrole-2-carboxylate oxygenase (30 aa).

Homotrimer. It depends on FAD as a cofactor.

It catalyses the reaction pyrrole-2-carboxylate + NADH + O2 + H(+) = 5-hydroxypyrrole-2-carboxylate + NAD(+) + H2O. Functionally, monooxygenase that initiates the degradation of pyrrole-2-carboxylate, which allows Arthrobacter sp. strain Py1 to grow on pyrrole-2-carboxylate as sole carbon, nitrogen, and energy source. To a lesser extent, can also use pyrrole, pyrrole-2-aldehyde, and indole-2-carboxylate as substrate. This is Pyrrole-2-carboxylate oxygenase from Arthrobacter sp. (strain Py1).